Here is a 790-residue protein sequence, read N- to C-terminus: MLKRLARNNSSPWICSRCLQQSQRQRRFNSTFAATATARDHAPSALYGLSASGKTDDDALRKVFDNASFWESFKRGTSNKKPSGIIGNKYLTHPDGFIDFVTVTIQRCNGVVEKVSRAETIEDFKYMVKDLDKLSDLLCRVIDLADFVRSTHPNRQFQIMAVKAYHTVFQYMNQLNTTPVLYDQLKKASDIPEVFESWTEEERIVARILMEDFARFGIGLDDATRQKLVDLSGEIAEVGSQFVEGMSPETPTLKFESKRLKGLDPNLAKALTKWGETRISTMHHEAQAVLRFVDDAEVRRETYSAVRTAGSSTIARLEKMLKLRAELAQLSGYETFSHMTLENKMAKTPEAVNTFLKALYEDSRPSVLADLHELMELKRGDAHQDNFPNRMNAWDKFYYTQKMLSTMEGAYKQRTADSLSAYFSVGTVLQGISRLFDRLYGVRLVPQETQPGEVWEDGVRRLDVISDTEGHIAVLYCDLFSRPGKTPNPAHFTLRCSREILPAELEEMQHMPHRFSSPIEAATDGMSVSYNASRNSYFQLPTIALICDFSKPSSPRPTLLNIHDVRTLFHEMGHALHSILGRTALQNVSGTRCATDIAELPSVLMEHFAFDPSVLALYARHWDTNAPLPLALLENRLAIDNRNGYSELESQILLAMLDQAYHSNLPLDPAFNSTSVYHNTYTRFASVPEPAGTRWQGFFGHLFGYGATYYSYLFDRAIASRIWKGVFNEGRDGGSLDREKGELYKNEVLRWGGGRDGWVCLAGVLRDGKVGEGGEGAMREVGKWGIDAGK.

The N-terminal 29 residues, Met-1–Asn-29, are a transit peptide targeting the mitochondrion. His-570 contributes to the Zn(2+) binding site. The active site involves Glu-571. Positions 574 and 577 each coordinate Zn(2+).

It belongs to the peptidase M3 family. Requires Zn(2+) as cofactor.

Its subcellular location is the mitochondrion matrix. The catalysed reaction is Release of an N-terminal octapeptide as second stage of processing of some proteins imported into the mitochondrion.. Its function is as follows. Cleaves proteins, imported into the mitochondrion, to their mature size. While most mitochondrial precursor proteins are processed to the mature form in one step by mitochondrial processing peptidase (MPP), the sequential cleavage by MIP of an octapeptide after initial processing by MPP is a required step for a subgroup of nuclear-encoded precursor proteins destined for the matrix or the inner membrane. In Phaeosphaeria nodorum (strain SN15 / ATCC MYA-4574 / FGSC 10173) (Glume blotch fungus), this protein is Mitochondrial intermediate peptidase (OCT1).